The following is a 350-amino-acid chain: Heat-inducible transcription repressor HrcA (350 aa).

Belongs to the HrcA family.

Its function is as follows. Negative regulator of class I heat shock genes (grpE-dnaK-dnaJ and groELS operons). Prevents heat-shock induction of these operons. This chain is Heat-inducible transcription repressor HrcA, found in Xanthomonas axonopodis pv. citri (strain 306).